Consider the following 367-residue polypeptide: Nodulation protein 10 (367 aa).

The next 11 membrane-spanning stretches (helical) occupy residues 15 to 37, 46 to 66, 88 to 108, 109 to 129, 155 to 175, 183 to 203, 208 to 228, 245 to 265, 270 to 290, 312 to 332, and 335 to 355; these read FDLL…WLHL, VFDL…SGFL, IFPA…VTGG, LNVT…LTAA, VLWT…LLEI, GALV…HFNI, NPFL…GVLA, WWLA…AAFI, AAPV…SAAH, MLVM…LWIV, and VGTV…AMKL.

The protein belongs to the acyltransferase 3 family.

The protein resides in the cell membrane. Functionally, not known. NodX allows Rhizobium leguminosarum biovar viciae strain TOM to nodulate Afghanistan peas. This chain is Nodulation protein 10 (nodX), found in Rhizobium leguminosarum bv. viciae.